The sequence spans 400 residues: Enoyl-[acyl-carrier-protein] reductase [NADH] (400 aa).

NAD(+)-binding positions include Gly48 to Tyr53, Phe74 to Glu75, Asp111 to Ala112, and Leu139 to Ala140. Position 225 (Tyr225) interacts with substrate. Catalysis depends on Tyr235, which acts as the Proton donor. Residues Lys244 and Val273–Thr275 each bind NAD(+).

This sequence belongs to the TER reductase family. In terms of assembly, monomer.

The catalysed reaction is a 2,3-saturated acyl-[ACP] + NAD(+) = a (2E)-enoyl-[ACP] + NADH + H(+). Its pathway is lipid metabolism; fatty acid biosynthesis. Functionally, involved in the final reduction of the elongation cycle of fatty acid synthesis (FAS II). Catalyzes the reduction of a carbon-carbon double bond in an enoyl moiety that is covalently linked to an acyl carrier protein (ACP). The polypeptide is Enoyl-[acyl-carrier-protein] reductase [NADH] (Shewanella piezotolerans (strain WP3 / JCM 13877)).